The primary structure comprises 145 residues: Large ribosomal subunit protein uL15 (145 aa).

Positions methionine 1–arginine 18 are enriched in basic and acidic residues. Residues methionine 1–glutamate 51 are disordered. Residues serine 42–glutamate 51 are compositionally biased toward gly residues.

It belongs to the universal ribosomal protein uL15 family. As to quaternary structure, part of the 50S ribosomal subunit.

Its function is as follows. Binds to the 23S rRNA. The protein is Large ribosomal subunit protein uL15 of Mesoplasma florum (strain ATCC 33453 / NBRC 100688 / NCTC 11704 / L1) (Acholeplasma florum).